We begin with the raw amino-acid sequence, 669 residues long: DNA ligase (669 aa).

35 to 39 (DFEYD) provides a ligand contact to NAD(+). The segment at 52-71 (YPEWDSPDSPTHRVGSDKTE) is disordered. Over residues 61–71 (PTHRVGSDKTE) the composition is skewed to basic and acidic residues. Residues 84-85 (SL) and E115 contribute to the NAD(+) site. K117 acts as the N6-AMP-lysine intermediate in catalysis. R138, E175, K290, and K314 together coordinate NAD(+). Zn(2+) is bound by residues C408, C411, C426, and C432. A BRCT domain is found at 590-669 (PVSARLAGKT…EEEFLRLIEE (80 aa)).

The protein belongs to the NAD-dependent DNA ligase family. LigA subfamily. The cofactor is Mg(2+). Mn(2+) is required as a cofactor.

It catalyses the reaction NAD(+) + (deoxyribonucleotide)n-3'-hydroxyl + 5'-phospho-(deoxyribonucleotide)m = (deoxyribonucleotide)n+m + AMP + beta-nicotinamide D-nucleotide.. Functionally, DNA ligase that catalyzes the formation of phosphodiester linkages between 5'-phosphoryl and 3'-hydroxyl groups in double-stranded DNA using NAD as a coenzyme and as the energy source for the reaction. It is essential for DNA replication and repair of damaged DNA. The sequence is that of DNA ligase from Porphyromonas gingivalis (strain ATCC 33277 / DSM 20709 / CIP 103683 / JCM 12257 / NCTC 11834 / 2561).